Reading from the N-terminus, the 147-residue chain is 3-dehydroquinate dehydratase (147 aa).

Tyrosine 23 serves as the catalytic Proton acceptor. Asparagine 74, histidine 80, and aspartate 87 together coordinate substrate. Catalysis depends on histidine 100, which acts as the Proton donor. Residues 101 to 102 (LS) and arginine 111 each bind substrate.

Belongs to the type-II 3-dehydroquinase family. As to quaternary structure, homododecamer.

It catalyses the reaction 3-dehydroquinate = 3-dehydroshikimate + H2O. Its pathway is metabolic intermediate biosynthesis; chorismate biosynthesis; chorismate from D-erythrose 4-phosphate and phosphoenolpyruvate: step 3/7. Functionally, catalyzes a trans-dehydration via an enolate intermediate. This is 3-dehydroquinate dehydratase from Clostridium botulinum (strain 657 / Type Ba4).